Here is a 347-residue protein sequence, read N- to C-terminus: Dolichyl-diphosphooligosaccharide--protein glycosyltransferase subunit TUSC3 (347 aa).

A signal peptide spans 1 to 41 (MSARAAPSRRRQAGRRLRYLPTGSFPFLLLLLLLCIQLGGG). Topologically, residues 42–196 (QKKKENLLAE…DVHIRVFRPP (155 aa)) are lumenal. The Thioredoxin domain maps to 59–187 (WSSRRSIFRM…LAKWIADRTD (129 aa)). Asparagine 83 carries N-linked (GlcNAc...) asparagine glycosylation. Cysteine 99 and cysteine 102 are joined by a disulfide. Residues 197–217 (NYSGTIALALLVSLVGGLLYL) traverse the membrane as a helical segment. The Cytoplasmic portion of the chain corresponds to 218-221 (RRNN). The chain crosses the membrane as a helical span at residues 222–242 (LEFIYNKTGWAMVSLCIVFAM). Over 243–276 (TSGQMWNHIRGPPYAHKNPHNGQVSYIHGSSQAQ) the chain is Lumenal. A helical transmembrane segment spans residues 277–297 (FVAESHIILVLNAAITMGMVL). Residues 298-312 (LNEAATSKGDVGKRR) are Cytoplasmic-facing. The helical transmembrane segment at 313 to 333 (IICLVGLGLVVFFFSFLLSIF) threads the bilayer. The Lumenal portion of the chain corresponds to 334–347 (RSKYHGYPYSFLIK).

Belongs to the OST3/OST6 family. Accessory component of the STT3B-containing form of the oligosaccharyltransferase (OST) complex. OST exists in two different complex forms which contain common core subunits RPN1, RPN2, OST48, OST4, DAD1 and TMEM258, either STT3A or STT3B as catalytic subunits, and form-specific accessory subunits. OST can form stable complexes with the Sec61 complex or with both the Sec61 and TRAP complexes. The association of TUSC3 or MAGT1 with the STT3B-containing complex seems to be mutually exclusvice.

The protein resides in the endoplasmic reticulum membrane. Its pathway is protein modification; protein glycosylation. In terms of biological role, acts as accessory component of the N-oligosaccharyl transferase (OST) complex which catalyzes the transfer of a high mannose oligosaccharide from a lipid-linked oligosaccharide donor to an asparagine residue within an Asn-X-Ser/Thr consensus motif in nascent polypeptide chains. Involved in N-glycosylation of STT3B-dependent substrates. Specifically required for the glycosylation of a subset of acceptor sites that are near cysteine residues; in this function seems to act redundantly with MAGT1. In its oxidized form proposed to form transient mixed disulfides with a glycoprotein substrate to facilitate access of STT3B to the unmodified acceptor site. Also has oxidoreductase-independent functions in the STT3B-containing OST complex possibly involving substrate recognition. Could indirectly play a role in Mg(2+) transport. This Mus musculus (Mouse) protein is Dolichyl-diphosphooligosaccharide--protein glycosyltransferase subunit TUSC3 (Tusc3).